A 426-amino-acid chain; its full sequence is Histidine--tRNA ligase (426 aa).

It belongs to the class-II aminoacyl-tRNA synthetase family. In terms of assembly, homodimer.

The protein resides in the cytoplasm. The catalysed reaction is tRNA(His) + L-histidine + ATP = L-histidyl-tRNA(His) + AMP + diphosphate + H(+). In Geobacillus kaustophilus (strain HTA426), this protein is Histidine--tRNA ligase.